Consider the following 260-residue polypeptide: MIFHANPGVIDLGINIDHVATLRNARGTVYPDPIEAALQAEEAGADLITLHLREDRRHIRDADVRALRPQLATRMNLECAITQEMLDIACEIRPQDVCLVPERREEVTTEGGLDVAGRFGQVSSACKQLAAAGIRVSLFIDADADQIAAAAACGAPVIELHTGRYADAHTPDELAIEFRRVADGVDAGIRHGLVVNAGHGLHYTNVQPIAALAGIKELNIGHAVVAHAVFVGWQNAVREMKAIMVAARLGTRYPAAGKPA.

N15 contacts 3-amino-2-oxopropyl phosphate. 17 to 18 (DH) provides a ligand contact to 1-deoxy-D-xylulose 5-phosphate. R26 is a 3-amino-2-oxopropyl phosphate binding site. H51 serves as the catalytic Proton acceptor. Residues R53 and H58 each coordinate 1-deoxy-D-xylulose 5-phosphate. The active-site Proton acceptor is E78. T108 is a 1-deoxy-D-xylulose 5-phosphate binding site. The Proton donor role is filled by H199. 3-amino-2-oxopropyl phosphate-binding positions include G200 and 221-222 (GH).

Belongs to the PNP synthase family. Homooctamer; tetramer of dimers.

It localises to the cytoplasm. It carries out the reaction 3-amino-2-oxopropyl phosphate + 1-deoxy-D-xylulose 5-phosphate = pyridoxine 5'-phosphate + phosphate + 2 H2O + H(+). It functions in the pathway cofactor biosynthesis; pyridoxine 5'-phosphate biosynthesis; pyridoxine 5'-phosphate from D-erythrose 4-phosphate: step 5/5. Its function is as follows. Catalyzes the complicated ring closure reaction between the two acyclic compounds 1-deoxy-D-xylulose-5-phosphate (DXP) and 3-amino-2-oxopropyl phosphate (1-amino-acetone-3-phosphate or AAP) to form pyridoxine 5'-phosphate (PNP) and inorganic phosphate. In Cupriavidus pinatubonensis (strain JMP 134 / LMG 1197) (Cupriavidus necator (strain JMP 134)), this protein is Pyridoxine 5'-phosphate synthase.